We begin with the raw amino-acid sequence, 1211 residues long: Diacylglycerol kinase 1 (1211 aa).

Residues 174–244 are disordered; that stretch reads HHSLGGHLSH…RNSSKKSSNS (71 aa). Residues 197–230 are compositionally biased toward polar residues; that stretch reads VTPSPLASGPSMFQASNPARRSVDSSPSHSATNH. Low complexity predominate over residues 231 to 244; it reads SQMSRNSSKKSSNS. EF-hand domains are found at residues 286 to 321 and 331 to 366; these read RPED…MMAV and ELRP…TIPL. D299, D301, N303, E310, D344, D346, D348, T350, and E355 together coordinate Ca(2+). Phorbol-ester/DAG-type zinc fingers lie at residues 382–432 and 449–498; these read IHVW…PASC and LHHW…KKEC. The 135-residue stretch at 548 to 682 folds into the DAGKc domain; the sequence is ELSCPLLVFV…LDRWSIEVTN (135 aa). Disordered stretches follow at residues 789–841, 874–893, and 910–958; these read TLRT…ETEK, AATA…QRNK, and DHED…QQQQ. Residues 795–805 are compositionally biased toward low complexity; it reads SSSSSNTSSGS. Over residues 826 to 841 the composition is skewed to basic and acidic residues; the sequence is DVREKSVPRRSGETEK. Positions 879–893 are enriched in polar residues; sequence PVGSNQSDNSSQRNK. The span at 931-958 shows a compositional bias: low complexity; the sequence is NSIPATPATPITPTTPNAASSVLQQQQQ.

It belongs to the eukaryotic diacylglycerol kinase family. In terms of tissue distribution, in 10-11 hours embryos, expression is abundant in a limited number of cells in the procephalic region and in the ventral nerve cord. Predominantly expressed in the adult nervous system and muscle: including compound eyes, brain cortex, fibrillar muscle, and tubular muscle.

The enzyme catalyses a 1,2-diacyl-sn-glycerol + ATP = a 1,2-diacyl-sn-glycero-3-phosphate + ADP + H(+). Upon cell stimulation converts the second messenger diacylglycerol into phosphatidate, initiating the resynthesis of phosphatidylinositols and attenuating protein kinase C activity. May have a role in the development of the embryonic nervous system and the function of the adult nervous system and muscle; regulating signal transduction in neurons. This chain is Diacylglycerol kinase 1 (Dgk), found in Drosophila melanogaster (Fruit fly).